A 167-amino-acid chain; its full sequence is uncharacterized protein (167 aa).

Residues 28-59 are a coiled coil; sequence LTGIREELKADIDETRLIAESVLEEKEKKVVE.

This is an uncharacterized protein from Aquifex aeolicus (strain VF5).